We begin with the raw amino-acid sequence, 129 residues long: Protein RfbJ (129 aa).

Belongs to the glycosyltransferase 2 family.

It functions in the pathway bacterial outer membrane biogenesis; lipopolysaccharide biosynthesis. In Shigella flexneri, this protein is Protein RfbJ (rfbJ).